The following is a 135-amino-acid chain: Mediator of RNA polymerase II transcription subunit 10 (135 aa).

Belongs to the Mediator complex subunit 10 family. As to quaternary structure, component of the Mediator complex, which is composed of MED1, MED4, MED6, MED7, MED8, MED9, MED10, MED11, MED12, MED13, MED13L, MED14, MED15, MED16, MED17, MED18, MED19, MED20, MED21, MED22, MED23, MED24, MED25, MED26, MED27, MED29, MED30, MED31, CCNC, CDK8 and CDC2L6/CDK11. The MED12, MED13, CCNC and CDK8 subunits form a distinct module termed the CDK8 module. Mediator containing the CDK8 module is less active than Mediator lacking this module in supporting transcriptional activation. Individual preparations of the Mediator complex lacking one or more distinct subunits have been variously termed ARC, CRSP, DRIP, PC2, SMCC and TRAP.

The protein resides in the nucleus. Its function is as follows. Component of the Mediator complex, a coactivator involved in the regulated transcription of nearly all RNA polymerase II-dependent genes. Mediator functions as a bridge to convey information from gene-specific regulatory proteins to the basal RNA polymerase II transcription machinery. Mediator is recruited to promoters by direct interactions with regulatory proteins and serves as a scaffold for the assembly of a functional preinitiation complex with RNA polymerase II and the general transcription factors. This chain is Mediator of RNA polymerase II transcription subunit 10 (Med10), found in Mus musculus (Mouse).